The chain runs to 479 residues: Replication factor C large subunit (479 aa).

Residue 50 to 57 (GPPGSGKT) coordinates ATP. Positions 420-468 (EKIRKERKEEEKVEVREEKPEEKVEEKREERETKKEKEKKEEKKAEKKG) are enriched in basic and acidic residues. The disordered stretch occupies residues 420 to 479 (EKIRKERKEEEKVEVREEKPEEKVEEKREERETKKEKEKKEEKKAEKKGKQVTLFDFIKK).

It belongs to the activator 1 small subunits family. RfcL subfamily. As to quaternary structure, heterohexamer composed of four small subunits (RfcS) and two large subunits (RfcL).

In terms of biological role, part of the RFC clamp loader complex which loads the PCNA sliding clamp onto DNA. The complex possesses DNA-independent ATPase activity. The chain is Replication factor C large subunit (rfcL) from Pyrococcus abyssi (strain GE5 / Orsay).